A 142-amino-acid chain; its full sequence is MKTFSAKPHEVKREWFVVDATDKVLGRLATEIARRLRGKHKAIYTPHIDTGDFVVVTNVDKITVTGNKAEDKKYFRHSGYPGGIYETNFKKMQQRFPGRALETAVKGMLPKGPLGYAMLKKLKCYAGEQHPHTAQQPKALEI.

This sequence belongs to the universal ribosomal protein uL13 family. As to quaternary structure, part of the 50S ribosomal subunit.

Functionally, this protein is one of the early assembly proteins of the 50S ribosomal subunit, although it is not seen to bind rRNA by itself. It is important during the early stages of 50S assembly. The protein is Large ribosomal subunit protein uL13 of Dechloromonas aromatica (strain RCB).